The chain runs to 100 residues: ATP synthase subunit g 2, mitochondrial (100 aa).

It belongs to the ATPase g subunit family. As to quaternary structure, F-type ATPases have 2 components, CF(1) - the catalytic core - and CF(0) - the membrane proton channel. CF(0) seems to have nine subunits: a, b, c, d, e, f, g, F6 and 8 (or A6L).

It is found in the mitochondrion membrane. Its function is as follows. Mitochondrial membrane ATP synthase (F(1)F(0) ATP synthase or Complex V) produces ATP from ADP in the presence of a proton gradient across the membrane which is generated by electron transport complexes of the respiratory chain. F-type ATPases consist of two structural domains, F(1) - containing the extramembraneous catalytic core, and F(0) - containing the membrane proton channel, linked together by a central stalk and a peripheral stalk. During catalysis, ATP synthesis in the catalytic domain of F(1) is coupled via a rotary mechanism of the central stalk subunits to proton translocation. Part of the complex F(0) domain. Minor subunit located with subunit a in the membrane. In Homo sapiens (Human), this protein is ATP synthase subunit g 2, mitochondrial.